The primary structure comprises 471 residues: Metal tolerance protein C1 (471 aa).

At 1-78 (MGIIRFQILN…PGEEGEKIFR (78 aa)) the chain is on the cytoplasmic side. The chain crosses the membrane as a helical span at residues 79–99 (LGLTADIGLSVAKALTGYLCG). The Vacuolar portion of the chain corresponds to 100 to 101 (ST). The chain crosses the membrane as a helical span at residues 102–122 (AIIADAAHSVSDVVLSGVALV). Residues 123–144 (SYRAANVPKDKEHPYGHGKFET) lie on the Cytoplasmic side of the membrane. The helical transmembrane segment at 145-165 (LGALGISAMLLATGSGIAWHA) threads the bilayer. The Vacuolar portion of the chain corresponds to 166–192 (LDLLSIALSAAPEVIHSGHHHGIDMNH). Residues 193–213 (PILALTVTIASISIKEGLYWI) traverse the membrane as a helical segment. The Cytoplasmic portion of the chain corresponds to 214 to 236 (TKRAGEKQGSGLMMANAWHHRSD). A helical transmembrane segment spans residues 237–257 (AISSLVALVGVGGSILGVNFL). The Vacuolar portion of the chain corresponds to 258-423 (DPLAGLVVST…RITPHLLHSK (166 aa)). Residues 424 to 444 (ILLQIVVAMPSTMSIQDVMIA) form a helical membrane-spanning segment. Residues 445–471 (AEHAEKEILKAAPNVARVSIQLSLNSE) are Cytoplasmic-facing.

It belongs to the cation diffusion facilitator (CDF) transporter (TC 2.A.4) family.

The protein localises to the vacuole membrane. Involved in sequestration of excess metal in the cytoplasm into vacuoles to maintain metal homeostasis. This Arabidopsis thaliana (Mouse-ear cress) protein is Metal tolerance protein C1 (MTPC1).